The following is an 804-amino-acid chain: E3 UFM1-protein ligase 1 homolog (804 aa).

An N-acetylmethionine modification is found at Met-1. A disordered region spans residues 397 to 483; sequence IHPSSKSSES…VKAQESNNII (87 aa). The span at 400-409 shows a compositional bias: low complexity; that stretch reads SSKSSESTES. Residues 463–475 are compositionally biased toward basic and acidic residues; that stretch reads LDSKAGGKKESVK.

The protein belongs to the UFL1 family.

E3 UFM1-protein ligase that mediates ufmylation of target proteins. The polypeptide is E3 UFM1-protein ligase 1 homolog (Arabidopsis thaliana (Mouse-ear cress)).